A 159-amino-acid chain; its full sequence is Transcriptional repressor NrdR (159 aa).

A zinc finger lies at 3–34 (CPTCQNTDSRVLESRSADTGKSVRRRRECLNC). Residues 49–139 (ISVIKKDGSR…VYRKFNGVKD (91 aa)) form the ATP-cone domain.

It belongs to the NrdR family. Zn(2+) serves as cofactor.

Negatively regulates transcription of bacterial ribonucleotide reductase nrd genes and operons by binding to NrdR-boxes. The polypeptide is Transcriptional repressor NrdR (Prochlorococcus marinus subsp. pastoris (strain CCMP1986 / NIES-2087 / MED4)).